The sequence spans 149 residues: MKILLLEDVKNLGKAGEVCEVKDGYGNNFLIANQKAKLATNEVINKYKAEAKKKAEKEALEKAQKLQMVETLQTITLTIHKKVGANGSLFGAITKEEITERLKEQHASLDLDKKDIELKHPIKSTGIYEIEVKLGSGVVGTFKIDVVAE.

Belongs to the bacterial ribosomal protein bL9 family.

Binds to the 23S rRNA. In Helicobacter pylori (strain P12), this protein is Large ribosomal subunit protein bL9.